Reading from the N-terminus, the 298-residue chain is Lipoyl synthase (298 aa).

[4Fe-4S] cluster-binding residues include C40, C45, C51, C67, C71, C74, and S280. Residues 53-269 form the Radical SAM core domain; the sequence is AVRRTATFMI…KEIALSKGFT (217 aa).

It belongs to the radical SAM superfamily. Lipoyl synthase family. [4Fe-4S] cluster is required as a cofactor.

Its subcellular location is the cytoplasm. The catalysed reaction is [[Fe-S] cluster scaffold protein carrying a second [4Fe-4S](2+) cluster] + N(6)-octanoyl-L-lysyl-[protein] + 2 oxidized [2Fe-2S]-[ferredoxin] + 2 S-adenosyl-L-methionine + 4 H(+) = [[Fe-S] cluster scaffold protein] + N(6)-[(R)-dihydrolipoyl]-L-lysyl-[protein] + 4 Fe(3+) + 2 hydrogen sulfide + 2 5'-deoxyadenosine + 2 L-methionine + 2 reduced [2Fe-2S]-[ferredoxin]. The protein operates within protein modification; protein lipoylation via endogenous pathway; protein N(6)-(lipoyl)lysine from octanoyl-[acyl-carrier-protein]. Its function is as follows. Catalyzes the radical-mediated insertion of two sulfur atoms into the C-6 and C-8 positions of the octanoyl moiety bound to the lipoyl domains of lipoate-dependent enzymes, thereby converting the octanoylated domains into lipoylated derivatives. The protein is Lipoyl synthase of Geobacillus sp. (strain WCH70).